Reading from the N-terminus, the 524-residue chain is Tyrosine-protein kinase HCK (524 aa).

The segment at 1 to 72 (MGGRSSCEDP…NNSNSMPPGF (72 aa)) is disordered. Glycine 2 carries N-myristoyl glycine lipidation. Residue glycine 3 is the site of S-palmitoyl cysteine attachment. Over residues 29–38 (FLRDGSKASK) the composition is skewed to basic and acidic residues. Tyrosine 50 is subject to Phosphotyrosine; by autocatalysis. Over residues 54–68 (PTSSSKLGPNNSNSM) the composition is skewed to polar residues. An SH3 domain is found at 76 to 136 (SEDTIVVALY…PSNYVARVNS (61 aa)). Residues 142–239 (WFFKGISRKD…GLCQKLSVPC (98 aa)) enclose the SH2 domain. Position 200 is a phosphothreonine (threonine 200). Tyrosine 207 is subject to Phosphotyrosine. Residues 260-513 (LQMEKKLGAG…YIQSVLDDFY (254 aa)) enclose the Protein kinase domain. ATP is bound by residues 266 to 274 (LGAGQFGEV) and lysine 288. The active-site Proton acceptor is the aspartate 379. Tyrosine 409 is subject to Phosphotyrosine; by autocatalysis. Serine 460 is modified (phosphoserine). Position 520 is a phosphotyrosine (tyrosine 520).

This sequence belongs to the protein kinase superfamily. Tyr protein kinase family. SRC subfamily. In terms of assembly, interacts with ADAM15. Interacts with FASLG. Interacts with ARRB1 and ARRB2. Interacts with FCGR1A; the interaction may be indirect. Interacts with IL6ST. Interacts (via SH3 domain) with ELMO1. Interacts (via SH3 domain) with TP73. Interacts with YAP1. Interacts with ABL1 and ITGB1, and thereby recruits ABL1 to activated ITGB1. Interacts (via SH2 domain) with FLT3 (tyrosine phosphorylated). Interacts with CBL. Interacts with VAV1, WAS and RAPGEF1. Interacts (via SH3 domain) with WDCP. Post-translationally, phosphorylated on several tyrosine residues. Autophosphorylated. Becomes rapidly phosphorylated upon activation of the immunoglobulin receptors FCGR1A and FCGR2A. Phosphorylation at Tyr-409 increases kinase activity. Phosphorylation at Tyr-520 inhibits kinase activity. Kinase activity is not required for phosphorylation at Tyr-520, suggesting that this site may be a target of other kinases. In terms of processing, ubiquitinated by CBL, leading to its degradation via the proteasome. Isoform 2 palmitoylation at position 2 requires prior myristoylation. Palmitoylation at position 3 is required for caveolar localization of isoform 2. Expressed predominantly in cells of the myeloid and B-lymphoid lineages.

It is found in the cytoplasmic vesicle. The protein localises to the secretory vesicle. It localises to the cytoplasm. The protein resides in the cytosol. Its subcellular location is the membrane. It is found in the caveola. The protein localises to the lysosome. It localises to the cell projection. The protein resides in the podosome membrane. Its subcellular location is the cell membrane. It is found in the cell junction. The protein localises to the focal adhesion. It localises to the cytoskeleton. The protein resides in the golgi apparatus. Its subcellular location is the nucleus. The catalysed reaction is L-tyrosyl-[protein] + ATP = O-phospho-L-tyrosyl-[protein] + ADP + H(+). Subject to autoinhibition, mediated by intramolecular interactions involving the SH2 and SH3 domains. Kinase activity is also regulated by phosphorylation at regulatory tyrosine residues. Phosphorylation at Tyr-409 is required for optimal activity. Phosphorylation at Tyr-520 inhibits kinase activity. Inhibited by PP1. Its function is as follows. Non-receptor tyrosine-protein kinase found in hematopoietic cells that transmits signals from cell surface receptors and plays an important role in the regulation of innate immune responses, including neutrophil, monocyte, macrophage and mast cell functions, phagocytosis, cell survival and proliferation, cell adhesion and migration. Acts downstream of receptors that bind the Fc region of immunoglobulins, such as FCGR1A and FCGR2A, but also CSF3R, PLAUR, the receptors for IFNG, IL2, IL6 and IL8, and integrins, such as ITGB1 and ITGB2. During the phagocytic process, mediates mobilization of secretory lysosomes, degranulation, and activation of NADPH oxidase to bring about the respiratory burst. Plays a role in the release of inflammatory molecules. Promotes reorganization of the actin cytoskeleton and actin polymerization, formation of podosomes and cell protrusions. Inhibits TP73-mediated transcription activation and TP73-mediated apoptosis. Phosphorylates CBL in response to activation of immunoglobulin gamma Fc region receptors. Phosphorylates ADAM15, BCR, ELMO1, FCGR2A, GAB1, GAB2, RAPGEF1, STAT5B, TP73, VAV1 and WAS. In Mus musculus (Mouse), this protein is Tyrosine-protein kinase HCK (Hck).